Here is a 207-residue protein sequence, read N- to C-terminus: 5-amino-6-(5-phosphoribosylamino)uracil reductase (207 aa).

Residue Ser6 coordinates substrate. Trp8 provides a ligand contact to NADP(+). Arg22 is a substrate binding site. Asp38 serves as a coordination point for NADP(+). Substrate contacts are provided by Leu42 and Arg45. Position 72 (Ser72) interacts with NADP(+). Residue Glu137 participates in substrate binding.

This sequence belongs to the HTP reductase family.

The enzyme catalyses 5-amino-6-(5-phospho-D-ribitylamino)uracil + NADP(+) = 5-amino-6-(5-phospho-D-ribosylamino)uracil + NADPH + H(+). Its pathway is cofactor biosynthesis; riboflavin biosynthesis; 5-amino-6-(D-ribitylamino)uracil from GTP: step 3/4. This is 5-amino-6-(5-phosphoribosylamino)uracil reductase (ribD2) from Buchnera aphidicola subsp. Acyrthosiphon pisum (strain APS) (Acyrthosiphon pisum symbiotic bacterium).